A 164-amino-acid polypeptide reads, in one-letter code: Crossover junction endodeoxyribonuclease RuvC (164 aa).

Catalysis depends on residues D7, E67, and D140. Residues D7, E67, and D140 each coordinate Mg(2+).

It belongs to the RuvC family. Homodimer which binds Holliday junction (HJ) DNA. The HJ becomes 2-fold symmetrical on binding to RuvC with unstacked arms; it has a different conformation from HJ DNA in complex with RuvA. In the full resolvosome a probable DNA-RuvA(4)-RuvB(12)-RuvC(2) complex forms which resolves the HJ. It depends on Mg(2+) as a cofactor.

The protein localises to the cytoplasm. The enzyme catalyses Endonucleolytic cleavage at a junction such as a reciprocal single-stranded crossover between two homologous DNA duplexes (Holliday junction).. Its function is as follows. The RuvA-RuvB-RuvC complex processes Holliday junction (HJ) DNA during genetic recombination and DNA repair. Endonuclease that resolves HJ intermediates. Cleaves cruciform DNA by making single-stranded nicks across the HJ at symmetrical positions within the homologous arms, yielding a 5'-phosphate and a 3'-hydroxyl group; requires a central core of homology in the junction. The consensus cleavage sequence is 5'-(A/T)TT(C/G)-3'. Cleavage occurs on the 3'-side of the TT dinucleotide at the point of strand exchange. HJ branch migration catalyzed by RuvA-RuvB allows RuvC to scan DNA until it finds its consensus sequence, where it cleaves and resolves the cruciform DNA. The polypeptide is Crossover junction endodeoxyribonuclease RuvC (Pelotomaculum thermopropionicum (strain DSM 13744 / JCM 10971 / SI)).